The following is a 111-amino-acid chain: Protein GLUTAMINE DUMPER 6 (111 aa).

Residues 1–16 (MRPTPKVEIWKSPVPY) lie on the Extracellular side of the membrane. A helical membrane pass occupies residues 17-37 (LFGGLFLLVLLIALALLSLVC). At 38–111 (THQKPSSSSN…NCDNVTVIST (74 aa)) the chain is on the cytoplasmic side. Over residues 40–49 (QKPSSSSNNN) the composition is skewed to polar residues. Residues 40–63 (QKPSSSSNNNHMDEEDDVGDKDAK) form a disordered region. The VIMAG; degenerate motif lies at 75-79 (VILAG).

It belongs to the GLUTAMINE DUMPER 1 (TC 9.B.60) family. In terms of tissue distribution, expressed in the vascular tissues.

The protein localises to the membrane. Its function is as follows. Probable subunit of an amino acid transporter involved in the regulation of the amino acid metabolism. Stimulates amino acid export by activating nonselective amino acid facilitators. The polypeptide is Protein GLUTAMINE DUMPER 6 (GDU6) (Arabidopsis thaliana (Mouse-ear cress)).